A 156-amino-acid chain; its full sequence is Small ribosomal subunit protein uS7 (156 aa).

Belongs to the universal ribosomal protein uS7 family. As to quaternary structure, part of the 30S ribosomal subunit. Contacts proteins S9 and S11.

Functionally, one of the primary rRNA binding proteins, it binds directly to 16S rRNA where it nucleates assembly of the head domain of the 30S subunit. Is located at the subunit interface close to the decoding center, probably blocks exit of the E-site tRNA. This is Small ribosomal subunit protein uS7 from Acidobacterium capsulatum (strain ATCC 51196 / DSM 11244 / BCRC 80197 / JCM 7670 / NBRC 15755 / NCIMB 13165 / 161).